Here is a 200-residue protein sequence, read N- to C-terminus: Recombination protein RecR (200 aa).

A C4-type zinc finger spans residues 57–72; it reads CRSCRTLTEEELCPQC. In terms of domain architecture, Toprim spans 80–175; the sequence is TLLCVVEGPT…VASRIAHGVP (96 aa).

This sequence belongs to the RecR family.

May play a role in DNA repair. It seems to be involved in an RecBC-independent recombinational process of DNA repair. It may act with RecF and RecO. This is Recombination protein RecR from Pseudomonas savastanoi pv. phaseolicola (strain 1448A / Race 6) (Pseudomonas syringae pv. phaseolicola (strain 1448A / Race 6)).